Reading from the N-terminus, the 1257-residue chain is Neural cell adhesion molecule L1 (1257 aa).

Positions methionine 1–leucine 19 are cleaved as a signal peptide. The Extracellular segment spans residues isoleucine 20–glutamate 1120. Ig-like C2-type domains follow at residues proline 35 to serine 125, proline 139 to aspartate 226, proline 240 to threonine 328, proline 333 to tyrosine 420, proline 425 to threonine 507, and threonine 518 to leucine 607. 2 disulfides stabilise this stretch: cysteine 57/cysteine 114 and cysteine 158/cysteine 209. N-linked (GlcNAc...) asparagine glycans are attached at residues asparagine 100, asparagine 203, asparagine 247, and asparagine 294. 2 cysteine pairs are disulfide-bonded: cysteine 264-cysteine 312 and cysteine 354-cysteine 404. 4 N-linked (GlcNAc...) asparagine glycosylation sites follow: asparagine 433, asparagine 479, asparagine 490, and asparagine 505. Cysteine 448 and cysteine 497 form a disulfide bridge. Cysteine 539 and cysteine 591 form a disulfide bridge. Positions arginine 554–aspartate 556 match the Cell attachment site motif. Residues asparagine 588 and asparagine 671 are each glycosylated (N-linked (GlcNAc...) asparagine). 5 consecutive Fibronectin type-III domains span residues valine 615 to alanine 712, asparagine 717 to aspartate 810, alanine 814 to glycine 916, histidine 920 to serine 1015, and glycine 1016 to alanine 1115. The disordered stretch occupies residues glycine 698–glycine 725. A compositionally biased stretch (basic and acidic residues) spans alanine 713–glycine 725. Asparagine 726, asparagine 777, asparagine 825, asparagine 849, asparagine 876, asparagine 979, asparagine 1022, asparagine 1030, asparagine 1071, and asparagine 1105 each carry an N-linked (GlcNAc...) asparagine glycan. Residues glycine 1121–isoleucine 1143 traverse the membrane as a helical segment. At lysine 1144–glutamate 1257 the chain is on the cytoplasmic side. 4 positions are modified to phosphoserine: serine 1163, threonine 1172, arginine 1177, and serine 1178. A compositionally biased stretch (basic and acidic residues) spans tyrosine 1176–alanine 1187. 2 disordered regions span residues tyrosine 1176–serine 1207 and isoleucine 1226–glutamate 1257. Phosphoserine; by CaMK2 is present on serine 1181. Phosphoserine occurs at positions 1194, 1243, 1244, and 1248. Over residues asparagine 1241–isoleucine 1250 the composition is skewed to polar residues.

The protein belongs to the immunoglobulin superfamily. L1/neurofascin/NgCAM family. As to quaternary structure, interacts with SHTN1; the interaction occurs in axonal growth cones. Interacts with isoform 2 of BSG.

The protein localises to the cell membrane. It localises to the cell projection. It is found in the growth cone. The protein resides in the axon. Its subcellular location is the dendrite. Its function is as follows. Neural cell adhesion molecule involved in the dynamics of cell adhesion and in the generation of transmembrane signals at tyrosine kinase receptors. During brain development, critical in multiple processes, including neuronal migration, axonal growth and fasciculation, and synaptogenesis. In the mature brain, plays a role in the dynamics of neuronal structure and function, including synaptic plasticity. The chain is Neural cell adhesion molecule L1 (L1CAM) from Homo sapiens (Human).